The chain runs to 446 residues: Tektin-4 (446 aa).

Coiled-coil stretches lie at residues 182 to 215, 297 to 346, and 378 to 422; these read IRNV…MDYS, DAIA…NDKS, and SEVG…ANSI.

The protein belongs to the tektin family.

The protein localises to the cytoplasm. It localises to the cytoskeleton. It is found in the cilium axoneme. Its subcellular location is the cell projection. The protein resides in the cilium. The protein localises to the flagellum. Its function is as follows. Microtubule inner protein (MIP) part of the dynein-decorated doublet microtubules (DMTs) in cilia and flagellar axoneme. Forms filamentous polymers in the walls of ciliary and flagellar microtubules. Contributes to normal sperm motility. This Xenopus laevis (African clawed frog) protein is Tektin-4 (tekt4).